The following is a 135-amino-acid chain: Small ribosomal subunit protein uS11 (135 aa).

Residues 1 to 10 show a composition bias toward polar residues; that stretch reads MPPKSRTATA. Disordered regions lie at residues 1 to 27 and 114 to 135; these read MPPK…HGHA and GAIQ…RRRV. The span at 12 to 27 shows a compositional bias: basic residues; it reads RKPRRKEKKNVAHGHA.

This sequence belongs to the universal ribosomal protein uS11 family. In terms of assembly, part of the 30S ribosomal subunit. Interacts with proteins S7 and S18. Binds to IF-3.

Functionally, located on the platform of the 30S subunit, it bridges several disparate RNA helices of the 16S rRNA. Forms part of the Shine-Dalgarno cleft in the 70S ribosome. This Kineococcus radiotolerans (strain ATCC BAA-149 / DSM 14245 / SRS30216) protein is Small ribosomal subunit protein uS11.